Reading from the N-terminus, the 462-residue chain is Na(+)/H(+) antiporter NhaA 2 (462 aa).

Residues 1–31 form a disordered region; it reads MKSSTREQTPVTSPTPHDPTPPTPPRGSTPL. A compositionally biased stretch (pro residues) spans 16-27; it reads PHDPTPPTPPRG. 11 consecutive transmembrane segments (helical) span residues 52–72, 96–116, 134–154, 165–185, 195–215, 218–238, 244–264, 309–329, 337–357, 382–402, and 408–428; these read IGGA…NSPW, LTLG…IAGL, LVPV…YVLV, GWAI…AVIS, FLLT…AIFY, TLAV…GLLV, SWWL…ASGI, FAVP…LSGL, VALG…LGAT, LLGG…FGAG, and HVKV…AVVL.

This sequence belongs to the NhaA Na(+)/H(+) (TC 2.A.33) antiporter family.

The protein localises to the cell membrane. The catalysed reaction is Na(+)(in) + 2 H(+)(out) = Na(+)(out) + 2 H(+)(in). Na(+)/H(+) antiporter that extrudes sodium in exchange for external protons. This Kineococcus radiotolerans (strain ATCC BAA-149 / DSM 14245 / SRS30216) protein is Na(+)/H(+) antiporter NhaA 2.